A 211-amino-acid polypeptide reads, in one-letter code: Redox-sensing transcriptional repressor Rex (211 aa).

Positions 17–56 form a DNA-binding region, H-T-H motif; that stretch reads KYHRYLEELMKNEVDRISSKELGEKIGFTASQIRQDLNCF. 91–96 contributes to the NAD(+) binding site; it reads GAGNIG.

Belongs to the transcriptional regulatory Rex family. As to quaternary structure, homodimer.

Its subcellular location is the cytoplasm. Modulates transcription in response to changes in cellular NADH/NAD(+) redox state. The polypeptide is Redox-sensing transcriptional repressor Rex (Clostridium beijerinckii (strain ATCC 51743 / NCIMB 8052) (Clostridium acetobutylicum)).